The chain runs to 556 residues: Neurofilament light polypeptide (556 aa).

An N-acetylserine modification is found at Ser-2. Residues 2-94 (SSYGYDPFFP…KSIRSQERAQ (93 aa)) are head. An IF rod domain is found at 91–402 (ERAQLQDLND…KLLEGEETRL (312 aa)). The tract at residues 95–126 (LQDLNDRFACFIERVHELEQQNKVLEAELLVL) is coil 1A. A linker 1 region spans residues 127–139 (RQKHAEPSRFRAL). Residues 140-235 (YEQEIRELRL…KVHEEELAEL (96 aa)) form a coil 1B region. The tract at residues 236–254 (QAQIQYAHLSVEMDVSAKP) is linker 12. Positions 255-273 (DLSAALRDIRAQYEKLAAR) are coil 2A. The interval 274–282 (NMQNAEEWF) is linker 2. A coil 2B region spans residues 283 to 398 (RSRFTVLSES…AAYRKLLEGE (116 aa)). The tract at residues 399-445 (ETRLSFTSVGSITSGYTQTAPTFGRSAYSGLQSTSYLMTTRSFPTYY) is tail, subdomain A. The segment at 399–556 (ETRLSFTSVG…KEETEVKKKA (158 aa)) is tail. The tail, subdomain B (acidic) stretch occupies residues 446-556 (SSHVQEEQIE…KEETEVKKKA (111 aa)). Residues 464 to 473 (KAGEAKAAPA) are compositionally biased toward low complexity. The segment at 464–556 (KAGEAKAAPA…KEETEVKKKA (93 aa)) is disordered. The segment covering 474-540 (EEGEEEEKEE…AEETGEEEKE (67 aa)) has biased composition (acidic residues). Residues 541–556 (EKEAAGKEETEVKKKA) show a composition bias toward basic and acidic residues.

It belongs to the intermediate filament family. In terms of assembly, forms homodimers (in vitro).

Its subcellular location is the cell projection. It is found in the axon. The protein resides in the cytoplasm. The protein localises to the cytoskeleton. Its function is as follows. Neurofilaments usually contain three intermediate filament proteins: NEFL, NEFM, and NEFH which are involved in the maintenance of neuronal caliber. May additionally cooperate with the neuronal intermediate filament proteins to form neuronal filamentous networks. This chain is Neurofilament light polypeptide (NEFL), found in Coturnix japonica (Japanese quail).